The sequence spans 567 residues: TPR repeat-containing protein MJ1428 (567 aa).

TPR repeat units follow at residues 14-47, 48-81, 83-115, 116-148, 150-183, 199-234, 236-268, 269-301, 303-335, 344-379, 380-412, 414-446, and 505-538; these read YEDW…KNTN, PIDW…SPSN, YFAY…IKNE, ELFE…ANSK, LNAL…NPSH, INSY…DENS, ISYY…FNRS, LYYA…NSQN, YAYF…YLEE, LNLY…ENSS, RWWY…NPKD, STLK…VNSL, and AYIY…EMYR.

In Methanocaldococcus jannaschii (strain ATCC 43067 / DSM 2661 / JAL-1 / JCM 10045 / NBRC 100440) (Methanococcus jannaschii), this protein is TPR repeat-containing protein MJ1428.